A 134-amino-acid chain; its full sequence is MKALLNKDIREEIQALIEIAEENLSAAKILFENKLYRDAVARAYYAIFHSAKALLLTKNLNPKKHAGVIKMFGLYFVNEGYIEEIYGRIITKSYNLRWKADYTTDKPTEEEAESIIYEAEMFVDRIKKALKEIL.

The protein belongs to the UPF0332 family.

Functionally, putative toxin component of a putative type VII toxin-antitoxin (TA) system. Its cognate antitoxin might be MJ0604. The chain is Putative toxin MJ0605 from Methanocaldococcus jannaschii (strain ATCC 43067 / DSM 2661 / JAL-1 / JCM 10045 / NBRC 100440) (Methanococcus jannaschii).